The following is a 516-amino-acid chain: Glucose-6-phosphate 1-dehydrogenase 5, cytoplasmic (516 aa).

Residues glycine 38 to lysine 45, arginine 73, tyrosine 156, and lysine 183 each bind NADP(+). Residues lysine 183, histidine 213–lysine 217, glutamate 251, and aspartate 270 contribute to the D-glucose 6-phosphate site. Catalysis depends on histidine 275, which acts as the Proton acceptor. Lysine 358 is a binding site for NADP(+). D-glucose 6-phosphate-binding residues include lysine 361 and lysine 366. Residues lysine 367, arginine 371, and arginine 395 each contribute to the NADP(+) site. Glutamine 397 is a D-glucose 6-phosphate binding site. Residues tyrosine 403–lysine 405, aspartate 423–serine 425, arginine 489, and tryptophan 511 contribute to the NADP(+) site.

This sequence belongs to the glucose-6-phosphate dehydrogenase family. Forms homodimer. As to expression, expressed in leaves and stems.

Its subcellular location is the cytoplasm. The protein resides in the cytosol. The enzyme catalyses D-glucose 6-phosphate + NADP(+) = 6-phospho-D-glucono-1,5-lactone + NADPH + H(+). Its pathway is carbohydrate degradation; pentose phosphate pathway; D-ribulose 5-phosphate from D-glucose 6-phosphate (oxidative stage): step 1/3. Its activity is regulated as follows. Regulated by metabolites. Its function is as follows. Catalyzes the rate-limiting step of the oxidative pentose-phosphate pathway, which represents a route for the dissimilation of carbohydrates besides glycolysis. The main function of this enzyme is to provide reducing power (NADPH) and pentose phosphates for fatty acid and nucleic acid synthesis which are involved in membrane synthesis and cell division. The chain is Glucose-6-phosphate 1-dehydrogenase 5, cytoplasmic from Arabidopsis thaliana (Mouse-ear cress).